The following is a 335-amino-acid chain: tRNA N6-adenosine threonylcarbamoyltransferase (335 aa).

Fe cation-binding residues include His111, His115, and Tyr132. Substrate contacts are provided by residues 132–136 (YVSGG), Asp164, Gly177, Glu181, and Asn260. Fe cation is bound at residue Asp288.

This sequence belongs to the KAE1 / TsaD family. As to quaternary structure, monomer. Component of the KEOPS complex that consists of Kae1, Bud32, Cgi121 and Pcc1; the whole complex dimerizes. Requires Fe(2+) as cofactor.

Its subcellular location is the cytoplasm. It carries out the reaction L-threonylcarbamoyladenylate + adenosine(37) in tRNA = N(6)-L-threonylcarbamoyladenosine(37) in tRNA + AMP + H(+). Functionally, required for the formation of a threonylcarbamoyl group on adenosine at position 37 (t(6)A37) in tRNAs that read codons beginning with adenine. Is a component of the KEOPS complex that is probably involved in the transfer of the threonylcarbamoyl moiety of threonylcarbamoyl-AMP (TC-AMP) to the N6 group of A37. Kae1 likely plays a direct catalytic role in this reaction, but requires other protein(s) of the complex to fulfill this activity. This chain is tRNA N6-adenosine threonylcarbamoyltransferase, found in Methanococcoides burtonii (strain DSM 6242 / NBRC 107633 / OCM 468 / ACE-M).